Reading from the N-terminus, the 578-residue chain is Hemolysin 4 (578 aa).

Positions 289 to 322 are disordered; that stretch reads KDGPKASWRRRPSSASSVTMPTTPRIIGSNARPE. The region spanning 448 to 539 is the Ricin B-type lectin domain; that stretch reads RPVNLQLGGF…LSNLSAHQLL (92 aa).

It belongs to the HlyA hemolysin family.

Its function is as follows. Bacterial hemolysins are exotoxins that attack blood cell membranes and cause cell rupture by mechanisms not clearly defined. The polypeptide is Hemolysin 4 (ash4) (Aeromonas salmonicida).